Here is a 246-residue protein sequence, read N- to C-terminus: uncharacterized protein (246 aa).

This is an uncharacterized protein from Methanocaldococcus jannaschii (strain ATCC 43067 / DSM 2661 / JAL-1 / JCM 10045 / NBRC 100440) (Methanococcus jannaschii).